The chain runs to 496 residues: Cytochrome P450 71D18 (496 aa).

The helical; Signal-anchor for type II membrane protein transmembrane segment at 2-22 threads the bilayer; sequence ELDLLSAIIILVATYIVSLLI. Heme is bound at residue cysteine 436.

This sequence belongs to the cytochrome P450 family. Requires heme as cofactor.

The protein localises to the endoplasmic reticulum membrane. It catalyses the reaction (4S)-limonene + reduced [NADPH--hemoprotein reductase] + O2 = (1S,5R)-carveol + oxidized [NADPH--hemoprotein reductase] + H2O + H(+). Functionally, hydroxylates (-)-(4S)-limonene to (-)-trans-carveol, a precursor of (-)-carvone. Fluorinated substrate analogs are hydroxylated with the same regio- and stereochemistry. The polypeptide is Cytochrome P450 71D18 (CYP71D18) (Mentha gracilis (Gingermint)).